The primary structure comprises 257 residues: Outer membrane protein Omp26La (257 aa).

Positions 1 to 19 (MKKIALFITASLIAGNTLA) are cleaved as a signal peptide.

Belongs to the MipA/OmpV family.

Its subcellular location is the cell outer membrane. In Vibrio anguillarum (Listonella anguillarum), this protein is Outer membrane protein Omp26La.